The primary structure comprises 339 residues: Deubiquitinase and deneddylase Dub2 (339 aa).

The helical transmembrane segment at isoleucine 36 to phenylalanine 56 threads the bilayer. Catalysis depends on residues histidine 203, aspartate 220, and cysteine 282.

The protein belongs to the peptidase C48 family.

It is found in the secreted. The protein resides in the host cell. The protein localises to the membrane. Functionally, effector proteins function to alter host cell physiology and promote bacterial survival in host tissues. This protease possesses deubiquitinating and deneddylating activities. This is Deubiquitinase and deneddylase Dub2 (cdu2) from Chlamydia trachomatis serovar B (strain Jali20/OT).